Consider the following 630-residue polypeptide: uncharacterized protein (630 aa).

4 helical membrane passes run 254–274 (MFYAVINTYLIMLISVEELRV), 504–524 (IALLESLSFSWLDPFYGLTSI), 564–584 (MIFAYIAAFVVGFINFFSMVF), and 601–621 (IIVISIASVLAFILIVIAVLF).

Its subcellular location is the cell membrane. This is an uncharacterized protein from Mycoplasma genitalium (strain ATCC 33530 / DSM 19775 / NCTC 10195 / G37) (Mycoplasmoides genitalium).